A 461-amino-acid polypeptide reads, in one-letter code: Adenosylmethionine-8-amino-7-oxononanoate aminotransferase (461 aa).

117 to 118 (GA) lines the pyridoxal 5'-phosphate pocket. Tyr-150 contributes to the substrate binding site. Position 263 (Asp-263) interacts with pyridoxal 5'-phosphate. 3 residues coordinate substrate: Lys-296, Gly-331, and Arg-426. Lys-296 carries the post-translational modification N6-(pyridoxal phosphate)lysine.

This sequence belongs to the class-III pyridoxal-phosphate-dependent aminotransferase family. BioA subfamily. As to quaternary structure, homodimer. Requires pyridoxal 5'-phosphate as cofactor.

It is found in the cytoplasm. It catalyses the reaction (8S)-8-amino-7-oxononanoate + S-adenosyl-L-methionine = S-adenosyl-4-methylsulfanyl-2-oxobutanoate + (7R,8S)-7,8-diammoniononanoate. The protein operates within cofactor biosynthesis; biotin biosynthesis; 7,8-diaminononanoate from 8-amino-7-oxononanoate (SAM route): step 1/1. Its function is as follows. Catalyzes the transfer of the alpha-amino group from S-adenosyl-L-methionine (SAM) to 7-keto-8-aminopelargonic acid (KAPA) to form 7,8-diaminopelargonic acid (DAPA). It is the only aminotransferase known to utilize SAM as an amino donor. The chain is Adenosylmethionine-8-amino-7-oxononanoate aminotransferase from Methanocaldococcus jannaschii (strain ATCC 43067 / DSM 2661 / JAL-1 / JCM 10045 / NBRC 100440) (Methanococcus jannaschii).